We begin with the raw amino-acid sequence, 76 residues long: DNA-directed RNA polymerase subunit omega (76 aa).

It belongs to the RNA polymerase subunit omega family. In terms of assembly, the RNAP catalytic core consists of 2 alpha, 1 beta, 1 beta' and 1 omega subunit. When a sigma factor is associated with the core the holoenzyme is formed, which can initiate transcription.

It catalyses the reaction RNA(n) + a ribonucleoside 5'-triphosphate = RNA(n+1) + diphosphate. In terms of biological role, promotes RNA polymerase assembly. Latches the N- and C-terminal regions of the beta' subunit thereby facilitating its interaction with the beta and alpha subunits. This chain is DNA-directed RNA polymerase subunit omega (rpoZ), found in Aquifex aeolicus (strain VF5).